Consider the following 332-residue polypeptide: Holliday junction branch migration complex subunit RuvB (332 aa).

The interval 1-181 (MSRILDNELM…FGITGHMEYY (181 aa)) is large ATPase domain (RuvB-L). ATP-binding positions include Leu20, Arg21, Gly62, Lys65, Thr66, Thr67, 128–130 (EDF), Arg171, Tyr181, and Arg218. A Mg(2+)-binding site is contributed by Thr66. The segment at 182–252 (EAGDLTEIVE…ITDQALSMLD (71 aa)) is small ATPAse domain (RuvB-S). The head domain (RuvB-H) stretch occupies residues 255-332 (QEGLDYVDQK…EHLGYEYMKE (78 aa)). DNA is bound by residues Arg291, Arg310, Arg312, and Arg315.

This sequence belongs to the RuvB family. As to quaternary structure, homohexamer. Forms an RuvA(8)-RuvB(12)-Holliday junction (HJ) complex. HJ DNA is sandwiched between 2 RuvA tetramers; dsDNA enters through RuvA and exits via RuvB. An RuvB hexamer assembles on each DNA strand where it exits the tetramer. Each RuvB hexamer is contacted by two RuvA subunits (via domain III) on 2 adjacent RuvB subunits; this complex drives branch migration. In the full resolvosome a probable DNA-RuvA(4)-RuvB(12)-RuvC(2) complex forms which resolves the HJ.

It localises to the cytoplasm. The enzyme catalyses ATP + H2O = ADP + phosphate + H(+). Functionally, the RuvA-RuvB-RuvC complex processes Holliday junction (HJ) DNA during genetic recombination and DNA repair, while the RuvA-RuvB complex plays an important role in the rescue of blocked DNA replication forks via replication fork reversal (RFR). RuvA specifically binds to HJ cruciform DNA, conferring on it an open structure. The RuvB hexamer acts as an ATP-dependent pump, pulling dsDNA into and through the RuvAB complex. RuvB forms 2 homohexamers on either side of HJ DNA bound by 1 or 2 RuvA tetramers; 4 subunits per hexamer contact DNA at a time. Coordinated motions by a converter formed by DNA-disengaged RuvB subunits stimulates ATP hydrolysis and nucleotide exchange. Immobilization of the converter enables RuvB to convert the ATP-contained energy into a lever motion, pulling 2 nucleotides of DNA out of the RuvA tetramer per ATP hydrolyzed, thus driving DNA branch migration. The RuvB motors rotate together with the DNA substrate, which together with the progressing nucleotide cycle form the mechanistic basis for DNA recombination by continuous HJ branch migration. Branch migration allows RuvC to scan DNA until it finds its consensus sequence, where it cleaves and resolves cruciform DNA. The polypeptide is Holliday junction branch migration complex subunit RuvB (Streptococcus sanguinis (strain SK36)).